We begin with the raw amino-acid sequence, 734 residues long: Probable carboxypeptidase X1 (734 aa).

The signal sequence occupies residues 1-20; sequence MWGLLLALAAFAPAVGPALG. The segment at 30–62 is disordered; the sequence is AQPGTTKVPGSTPALHSSPAQPPAETANGTSEQ. A compositionally biased stretch (polar residues) spans 32-48; that stretch reads PGTTKVPGSTPALHSSP. Asparagine 57, asparagine 210, asparagine 220, and asparagine 318 each carry an N-linked (GlcNAc...) asparagine glycan. The 162-residue stretch at 113–274 folds into the F5/8 type C domain; the sequence is TGCPPLGLES…PCLRAEILAC (162 aa). An intrachain disulfide couples cysteine 115 to cysteine 274. A Peptidase M14 domain is found at 298–621; sequence QHHNYKAMRK…DALLTYLEQV (324 aa). Histidine 360 and glutamate 363 together coordinate Zn(2+). Asparagine 428 and asparagine 472 each carry an N-linked (GlcNAc...) asparagine glycan. Histidine 498 is a Zn(2+) binding site. The active-site Proton donor/acceptor is glutamate 591.

It belongs to the peptidase M14 family. The cofactor is Zn(2+).

It localises to the secreted. In terms of biological role, may be involved in cell-cell interactions. No carboxypeptidase activity was found yet. The sequence is that of Probable carboxypeptidase X1 (CPXM1) from Homo sapiens (Human).